We begin with the raw amino-acid sequence, 104 residues long: Pyrimidine/purine nucleoside phosphorylase (104 aa).

It belongs to the nucleoside phosphorylase PpnP family.

The catalysed reaction is a purine D-ribonucleoside + phosphate = a purine nucleobase + alpha-D-ribose 1-phosphate. It carries out the reaction adenosine + phosphate = alpha-D-ribose 1-phosphate + adenine. It catalyses the reaction cytidine + phosphate = cytosine + alpha-D-ribose 1-phosphate. The enzyme catalyses guanosine + phosphate = alpha-D-ribose 1-phosphate + guanine. The catalysed reaction is inosine + phosphate = alpha-D-ribose 1-phosphate + hypoxanthine. It carries out the reaction thymidine + phosphate = 2-deoxy-alpha-D-ribose 1-phosphate + thymine. It catalyses the reaction uridine + phosphate = alpha-D-ribose 1-phosphate + uracil. The enzyme catalyses xanthosine + phosphate = alpha-D-ribose 1-phosphate + xanthine. Its function is as follows. Catalyzes the phosphorolysis of diverse nucleosides, yielding D-ribose 1-phosphate and the respective free bases. Can use uridine, adenosine, guanosine, cytidine, thymidine, inosine and xanthosine as substrates. Also catalyzes the reverse reactions. This Geotalea uraniireducens (strain Rf4) (Geobacter uraniireducens) protein is Pyrimidine/purine nucleoside phosphorylase.